Consider the following 90-residue polypeptide: Putative transcript Y 12 protein (90 aa).

This is Putative transcript Y 12 protein (TTTY12) from Homo sapiens (Human).